The following is a 402-amino-acid chain: Flavohemoprotein (402 aa).

One can recognise a Globin domain in the interval 1 to 136 (MLSEKTIEIV…IADAFISIEA (136 aa)). His85 provides a ligand contact to heme b. Catalysis depends on charge relay system residues Tyr95 and Glu135. Residues 147 to 402 (GGWKDFRNFV…EFFGPAASLQ (256 aa)) are reductase. The 111-residue stretch at 150–260 (KDFRNFVVVK…SAPAGDFVLN (111 aa)) folds into the FAD-binding FR-type domain. Residues Tyr188 and 204–207 (RQYS) each bind FAD. An NADP(+)-binding site is contributed by 273-278 (GVGITP). Residue 394-397 (FFGP) coordinates FAD.

Belongs to the globin family. Two-domain flavohemoproteins subfamily. The protein in the C-terminal section; belongs to the flavoprotein pyridine nucleotide cytochrome reductase family. The cofactor is heme b. It depends on FAD as a cofactor.

It catalyses the reaction 2 nitric oxide + NADPH + 2 O2 = 2 nitrate + NADP(+) + H(+). The enzyme catalyses 2 nitric oxide + NADH + 2 O2 = 2 nitrate + NAD(+) + H(+). Functionally, is involved in NO detoxification in an aerobic process, termed nitric oxide dioxygenase (NOD) reaction that utilizes O(2) and NAD(P)H to convert NO to nitrate, which protects the bacterium from various noxious nitrogen compounds. Therefore, plays a central role in the inducible response to nitrosative stress. The chain is Flavohemoprotein from Bacillus anthracis.